A 276-amino-acid polypeptide reads, in one-letter code: NAD kinase (276 aa).

The active-site Proton acceptor is the aspartate 67. Residues 67-68 (DG), arginine 72, 136-137 (ND), lysine 147, arginine 164, aspartate 166, 177-182 (TAYALS), alanine 201, and glutamine 235 each bind NAD(+).

This sequence belongs to the NAD kinase family. A divalent metal cation is required as a cofactor.

Its subcellular location is the cytoplasm. The enzyme catalyses NAD(+) + ATP = ADP + NADP(+) + H(+). In terms of biological role, involved in the regulation of the intracellular balance of NAD and NADP, and is a key enzyme in the biosynthesis of NADP. Catalyzes specifically the phosphorylation on 2'-hydroxyl of the adenosine moiety of NAD to yield NADP. The polypeptide is NAD kinase (Thermococcus sibiricus (strain DSM 12597 / MM 739)).